Here is a 151-residue protein sequence, read N- to C-terminus: Transcriptional regulator MraZ (151 aa).

2 SpoVT-AbrB domains span residues 7–53 and 82–125; these read EYDC…SQTE and INEV…SPDL.

It belongs to the MraZ family. In terms of assembly, forms oligomers.

The protein resides in the cytoplasm. The protein localises to the nucleoid. The sequence is that of Transcriptional regulator MraZ from Cytophaga hutchinsonii (strain ATCC 33406 / DSM 1761 / CIP 103989 / NBRC 15051 / NCIMB 9469 / D465).